Consider the following 568-residue polypeptide: Natural resistance-associated macrophage protein 2 (568 aa).

Residues 1–40 are disordered; it reads MVLGPEQKMSDDSVSGDHGESASLGNINPAYSNPSLSQSP. Topologically, residues 1 to 69 are cytoplasmic; that stretch reads MVLGPEQKMS…EEYSCFSFRK (69 aa). A compositionally biased stretch (basic and acidic residues) spans 8-20; the sequence is KMSDDSVSGDHGE. The segment covering 23-40 has biased composition (polar residues); the sequence is SLGNINPAYSNPSLSQSP. A helical transmembrane segment spans residues 70-90; the sequence is LWAFTGPGFLMSIAYLDPGNI. At 91–96 the chain is on the extracellular side; sequence ESDLQS. Residues 97-117 form a helical membrane-spanning segment; the sequence is GAVAGFKLLWILLLATLVGLL. Topologically, residues 118–154 are cytoplasmic; it reads LQRLAARLGVVTGLHLAEVCHRQYPKVPRVILWLMVE. The helical transmembrane segment at 155–175 threads the bilayer; sequence LAIIGSDMQEVIGSAIAINLL. The Extracellular portion of the chain corresponds to 176-179; that stretch reads SVGR. The chain crosses the membrane as a helical span at residues 180-200; the sequence is IPLWGGVLITIADTFVFLFLD. The Cytoplasmic segment spans residues 201–208; it reads KYGLRKLE. A helical membrane pass occupies residues 209–229; the sequence is AFFGFLITIMALTFGYEYVTV. The Extracellular segment spans residues 230–255; that stretch reads KPSQSQVLKGMFVPSCSGCRTPQIEQ. Residues 256-276 traverse the membrane as a helical segment; sequence AVGIVGAVIMPHNMYLHSALV. The Cytoplasmic segment spans residues 277-301; the sequence is KSRQVNRNNKQEVREANKYFFIESC. A helical transmembrane segment spans residues 302-322; it reads IALFVSFIINVFVVSVFAEAF. The Extracellular segment spans residues 323–360; sequence FGKTNEQVVEVCTNTSSPHAGLFPKDNSTLAVDIYKGG. Residues Asn336 and Asn349 are each glycosylated (N-linked (GlcNAc...) asparagine). A helical membrane pass occupies residues 361–381; that stretch reads VVLGCYFGPAALYIWAVGILA. Over 382 to 408 the chain is Cytoplasmic; it reads AGQSSTMTGTYSGQFVMEGFLNLKWSR. Residues 409-429 traverse the membrane as a helical segment; it reads FARVVLTRSIAIIPTLLVAVF. The Extracellular segment spans residues 430–440; that stretch reads QDVEHLTGMND. The chain crosses the membrane as a helical span at residues 441–461; that stretch reads FLNVLQSLQLPFALIPILTFT. Residues 462 to 482 lie on the Cytoplasmic side of the membrane; sequence SLRPVMSDFANGLGWRIAGGI. Residues 483-503 traverse the membrane as a helical segment; the sequence is LVLIICSINMYFVVVYVRDLG. The Extracellular segment spans residues 504–506; the sequence is HVA. The chain crosses the membrane as a helical span at residues 507–527; the sequence is LYVVAAVVSVAYLGFVFYLGW. Residues 528-568 are Cytoplasmic-facing; that stretch reads QCLIALGMSFLDCGHTCHLGLTAQPELYLLNTMDADSLVSR. The tract at residues 555–559 is required for early endosome targeting; sequence YLLNT. Phosphoserine is present on residues Ser564 and Ser567.

This sequence belongs to the NRAMP family. As to quaternary structure, forms a complex with NDFIP1 and NEDD4L, in cortical neurons, in response to iron and cobalt exposure; this interaction leads to SLC11A2 ubiquitination by NEDD4L and proteasome-dependent degradation. Interacts with NDFIP1, NDFIP2 and WWP2; this interaction leads to SLC11A2 ubiquitination by WWP2 and subsequent proteasome-dependent degradation. Interacts with COX2 and TOM6 at the outer mitochondrion membrane. Interacts with ARRDC1; this interaction regulates the incorporation of SLC11A2 into extracellular vesicles through an ubiquitination-dependent mechanism. Interacts with ARRDC4; controls the incorporation of SLC11A2 into extracellular vesicles through an ubiquitination-dependent mechanism. Post-translationally, ubiquitinated by WWP2. N-glycosylated. Ubiquitously expressed. Expressed in erythroid progenitors.

Its subcellular location is the early endosome membrane. The protein localises to the apical cell membrane. It localises to the late endosome membrane. The protein resides in the lysosome membrane. It is found in the cell membrane. Its subcellular location is the extracellular vesicle membrane. The protein localises to the mitochondrion outer membrane. It localises to the golgi apparatus. The protein resides in the trans-Golgi network membrane. It is found in the recycling endosome membrane. The enzyme catalyses Fe(2+)(in) + H(+)(in) = Fe(2+)(out) + H(+)(out). The catalysed reaction is Co(2+)(out) + H(+)(out) = Co(2+)(in) + H(+)(in). It catalyses the reaction Cd(2+)(out) + H(+)(out) = Cd(2+)(in) + H(+)(in). It carries out the reaction Mn(2+)(in) + H(+)(in) = Mn(2+)(out) + H(+)(out). The enzyme catalyses Zn(2+)(out) + H(+)(out) = Zn(2+)(in) + H(+)(in). The catalysed reaction is Ni(2+)(out) + H(+)(out) = Ni(2+)(in) + H(+)(in). It catalyses the reaction H(+)(in) = H(+)(out). It carries out the reaction Fe(2+)(in) = Fe(2+)(out). Functionally, proton-coupled metal ion symporter operating with a proton to metal ion stoichiometry of 1:1. Selectively transports various divalent metal cations, in decreasing affinity: Cd(2+) &gt; Fe(2+) &gt; Co(2+), Mn(2+) &gt;&gt; Zn(2+), Ni(2+), VO(2+). Essential for maintenance of iron homeostasis by modulating intestinal absorption of dietary Fe(2+) and TF-associated endosomal Fe(2+) transport in erythroid precursors and other cells. Enables Fe(2+) and Mn(2+) ion entry into mitochondria, and is thus expected to promote mitochondrial heme synthesis, iron-sulfur cluster biogenesis and antioxidant defense. Can mediate uncoupled fluxes of either protons or metal ions. The polypeptide is Natural resistance-associated macrophage protein 2 (SLC11A2) (Homo sapiens (Human)).